We begin with the raw amino-acid sequence, 361 residues long: Phospho-N-acetylmuramoyl-pentapeptide-transferase (361 aa).

Transmembrane regions (helical) follow at residues Tyr21–Gly41, Met74–Ala94, Tyr97–Tyr117, Trp132–Gly152, Val168–Gly188, Gly199–Thr219, Leu239–Tyr259, Phe264–Val284, Phe288–Val308, and Val339–Lys359.

Belongs to the glycosyltransferase 4 family. MraY subfamily. Mg(2+) serves as cofactor.

It localises to the cell inner membrane. The enzyme catalyses UDP-N-acetyl-alpha-D-muramoyl-L-alanyl-gamma-D-glutamyl-meso-2,6-diaminopimeloyl-D-alanyl-D-alanine + di-trans,octa-cis-undecaprenyl phosphate = di-trans,octa-cis-undecaprenyl diphospho-N-acetyl-alpha-D-muramoyl-L-alanyl-D-glutamyl-meso-2,6-diaminopimeloyl-D-alanyl-D-alanine + UMP. It participates in cell wall biogenesis; peptidoglycan biosynthesis. Its function is as follows. Catalyzes the initial step of the lipid cycle reactions in the biosynthesis of the cell wall peptidoglycan: transfers peptidoglycan precursor phospho-MurNAc-pentapeptide from UDP-MurNAc-pentapeptide onto the lipid carrier undecaprenyl phosphate, yielding undecaprenyl-pyrophosphoryl-MurNAc-pentapeptide, known as lipid I. This Histophilus somni (strain 129Pt) (Haemophilus somnus) protein is Phospho-N-acetylmuramoyl-pentapeptide-transferase.